A 489-amino-acid polypeptide reads, in one-letter code: Inactive receptor-like serine/threonine-protein kinase At2g40270 (489 aa).

Residues 1–23 (MLFKMRSFVAFVLLLSWFGSCCS) form the signal peptide. Residues 24-139 (LKDQAVDFLK…PRNSHSSVPL (116 aa)) lie on the Extracellular side of the membrane. A disordered region spans residues 67–130 (KDLPSRKDRK…SAPLANSPIP (64 aa)). Low complexity predominate over residues 81–90 (AATTTPSSSP). Polar residues predominate over residues 99–116 (TKASTVSEPQKRSSTQDV). The span at 117 to 130 (SPSPSAPLANSPIP) shows a compositional bias: low complexity. The helical transmembrane segment at 140 to 160 (VVGCVGGAFFLLLVATGLYFF) threads the bilayer. At 161–489 (TSKAGKTVNP…WAELEVLSTA (329 aa)) the chain is on the cytoplasmic side. The 261-residue stretch at 200 to 460 (EDFSNVIGSC…PTMQEVTGWL (261 aa)) folds into the Protein kinase domain.

Belongs to the protein kinase superfamily. Ser/Thr protein kinase family.

It localises to the cell membrane. The protein is Inactive receptor-like serine/threonine-protein kinase At2g40270 of Arabidopsis thaliana (Mouse-ear cress).